We begin with the raw amino-acid sequence, 308 residues long: Polyprenal reductase (308 aa).

Residues 1 to 2 (MT) lie on the Cytoplasmic side of the membrane. A helical membrane pass occupies residues 3-23 (LLALVWLLLDATFLITLLWHL). Over 24–65 (LQGCKSGHSLLCSVFQDLIRYGKTKTGLQRPAWLQWFDIPKR) the chain is Lumenal. A helical membrane pass occupies residues 66–86 (CFWHFYCVSLIWNGCLLWILL). Topologically, residues 87-120 (RLLLQSVPVPEWLQLVLHFLHAGSEPQILDRELS) are cytoplasmic. The chain crosses the membrane as a helical span at residues 121 to 141 (VILALALLWLHSLRRLLECLF). The Lumenal segment spans residues 142-148 (VSVFSNG). Residues 149-169 (VIHLVQYCFGLGYYFLIGITV) traverse the membrane as a helical segment. The Cytoplasmic portion of the chain corresponds to 170–184 (LTYCPLDRRTVSTDN). The chain crosses the membrane as a helical span at residues 185 to 205 (LLTQCHWYHILGLALYIWASL). Residues 206-255 (HQYRCHCILAGLRKSASGNVINLNHSVPCGDWFERVSCPHYFAELLIYVS) lie on the Lumenal side of the membrane. Residues 256–276 (IAVVFGLLNTIWWLVVLYVLL) form a helical membrane-spanning segment. The Cytoplasmic portion of the chain corresponds to 277 to 308 (NQALAALLCHEFYHEKFDTYPIHRKAFIPFIF).

Belongs to the steroid 5-alpha reductase family. Polyprenal reductase subfamily.

The protein localises to the endoplasmic reticulum membrane. The catalysed reaction is a di-trans,poly-cis-dolichal + NADP(+) = a di-trans,poly-cis-polyprenal + NADPH + H(+). The enzyme catalyses a 3-oxo-5alpha-steroid + NADP(+) = a 3-oxo-Delta(4)-steroid + NADPH + H(+). It catalyses the reaction androst-4-ene-3,17-dione + NADPH + H(+) = 5alpha-androstan-3,17-dione + NADP(+). It carries out the reaction 17beta-hydroxy-5alpha-androstan-3-one + NADP(+) = testosterone + NADPH + H(+). Its pathway is protein modification; protein glycosylation. In terms of biological role, plays a key role in early steps of protein N-linked glycosylation by being involved in the conversion of polyprenol into dolichol. Acts as a polyprenal reductase that mediates the reduction of polyprenal into dolichal in a NADP-dependent mechanism. Dolichols are required for the synthesis of dolichol-linked monosaccharides and the oligosaccharide precursor used for N-glycosylation. Also able to convert testosterone (T) into 5-alpha-dihydrotestosterone (DHT). The chain is Polyprenal reductase (srd5a3) from Xenopus tropicalis (Western clawed frog).